Consider the following 374-residue polypeptide: Dihydrolipoyllysine-residue acetyltransferase component of acetoin cleaving system (374 aa).

Residues 9-84 form the Lipoyl-binding domain; the sequence is IIPIVMPKWG…PVKALLGVLA (76 aa). An N6-lipoyllysine modification is found at Lys-50. The AB hydrolase-1 domain occupies 137–360; that stretch reads TVLFIHGFGG…DAGHMSQMEK (224 aa).

(R)-lipoate serves as cofactor.

It catalyses the reaction N(6)-[(R)-dihydrolipoyl]-L-lysyl-[protein] + acetyl-CoA = N(6)-[(R)-S(8)-acetyldihydrolipoyl]-L-lysyl-[protein] + CoA. It functions in the pathway ketone degradation; acetoin degradation. Dihydrolipoamide acetyltransferase involved in acetoin catabolism. This chain is Dihydrolipoyllysine-residue acetyltransferase component of acetoin cleaving system (acoC), found in Cupriavidus necator (strain ATCC 17699 / DSM 428 / KCTC 22496 / NCIMB 10442 / H16 / Stanier 337) (Ralstonia eutropha).